A 479-amino-acid polypeptide reads, in one-letter code: MSLVLKKSIDDVALKDKKVLIRVDFNVPVKNGEITNDFRIRSALPTIQKVLKEGGSCILMSHLGRPKGARMSDPKPEKGVRGYEEAATLRPVAAALSELLEKKVAFAPDCLNASIYVSKLKRGDVLLLENVRFYTEEGSKKEEEADAMAKVLASYADLYVSDAFGTAHRDSATMTGIPKVLGSGYAGYLMEKEINYFSRVLNNPPRPLVAIVGGAKVSDKIELLDNMLGRINYLVIGGAMAYTFQKAQGRKIGISMCEEDKLDLAKSLLKKAQERGVQVLLPVDHVCNKEFKAVDSPLVTEDVDVPDGYMALDIGPKTIHMYEEVIGRCKSAIWNGPMGVFEMPCYSKGTFAVAKAMGTGTQKDGLLSIIGGGDTASAAELSGEAKNMSHVSTGGGASLELLEGKTLPGVAILTDKEVKGRGPLLKCACGGASPSNESCPRRREGIWGGGFIVTEIVKLVGALLIGIFIGRRLNTKLIR.

(2R)-3-phosphoglycerate contacts are provided by Val23, Asp24, Phe25, Asn26, Arg39, Ser61, His62, Gly64, Arg65, Arg132, His168, and Arg169. The ADP site is built by Gly214 and Ala215. A CDP-binding site is contributed by Gly214. AMP-binding residues include Ala215 and Lys216. Ala215 is a binding site for ATP. Ala215 is a Mg(2+) binding site. Position 216 (Lys216) interacts with (2R)-3-phosphoglycerate. Asp219 is a binding site for CDP. Asp219 contacts Mg(2+). Lys220 and Gly238 together coordinate ADP. Lys220 is a binding site for AMP. Lys220 lines the ATP pocket. Gly238 lines the CDP pocket. AMP is bound by residues Ala239 and Ala311. Residues Ala239 and Ala311 each contribute to the ATP site. Positions 311 and 335 each coordinate ADP. Residues Gly336 and Phe341 each contribute to the CDP site. The ADP site is built by Phe341, Glu342, Asp374, and Thr375. Position 342 (Glu342) interacts with AMP. Residues Glu342, Asp374, and Thr375 each contribute to the ATP site. Asp374 contacts Mg(2+).

This sequence belongs to the phosphoglycerate kinase family. As to quaternary structure, monomer. Mg(2+) serves as cofactor.

Its subcellular location is the glycosome. The enzyme catalyses (2R)-3-phosphoglycerate + ATP = (2R)-3-phospho-glyceroyl phosphate + ADP. The protein operates within carbohydrate degradation; glycolysis; pyruvate from D-glyceraldehyde 3-phosphate: step 2/5. In Leishmania mexicana, this protein is Phosphoglycerate kinase, glycosomal (PGKC).